Consider the following 1288-residue polypeptide: Contactin-associated protein-like 3 (1288 aa).

The first 25 residues, 1 to 25 (MASVAWAVLKVLLLLPTQTWSPVGA), serve as a signal peptide directing secretion. At 26–1245 (GNPPDCDAPL…LVNADRRDSA (1220 aa)) the chain is on the extracellular side. One can recognise an F5/8 type C domain in the interval 31 to 177 (CDAPLASALP…IGMRIEVYGC (147 aa)). A disulfide bond links Cys-31 and Cys-177. 2 Laminin G-like domains span residues 183 to 364 (VVYF…SFSC) and 370 to 545 (VPVT…IDSC). 4 N-linked (GlcNAc...) asparagine glycosylation sites follow: Asn-285, Asn-359, Asn-441, and Asn-497. Cys-332 and Cys-364 are disulfide-bonded. Cystine bridges form between Cys-513-Cys-545, Cys-551-Cys-562, Cys-556-Cys-571, and Cys-573-Cys-583. Residues 551 to 583 (CLPSYCEHGGECSQSWDTFSCDCLGTGYTGETC) form the EGF-like 1 domain. Residues 584–792 (HSSLYEQSCE…LLCRGDQSFW (209 aa)) form the Fibrinogen C-terminal domain. N-linked (GlcNAc...) asparagine glycosylation is found at Asn-623 and Asn-706. The 166-residue stretch at 793–958 (NSASFNTETS…TVTPGVEPGC (166 aa)) folds into the Laminin G-like 3 domain. Intrachain disulfides connect Cys-931/Cys-958, Cys-962/Cys-975, Cys-969/Cys-984, and Cys-986/Cys-996. The EGF-like 2 domain occupies 962 to 996 (CSTYGHLCRNGGRCREKRRGVTCDCAFSAYDGPFC). A Laminin G-like 4 domain is found at 1015–1203 (QEHYTLSENS…RGHVAPMARC (189 aa)). Asn-1023, Asn-1073, and Asn-1120 each carry an N-linked (GlcNAc...) asparagine glycan. An intrachain disulfide couples Cys-1167 to Cys-1203. The segment at 1215–1236 (ELAPRLAGGAGRSGPADEGEPL) is disordered. Residues 1246–1266 (VIGGVIAVVIFILLCITAIAI) form a helical membrane-spanning segment. The Cytoplasmic segment spans residues 1267–1288 (RIYQQRKLRKENESKVSKKEEC).

It belongs to the neurexin family.

It is found in the cell membrane. The protein resides in the secreted. In Homo sapiens (Human), this protein is Contactin-associated protein-like 3 (CNTNAP3).